Reading from the N-terminus, the 1119-residue chain is uncharacterized protein (1119 aa).

The N-terminal stretch at 1–21 (MNNIYISLYIFFISYIIQLCF) is a signal peptide. Residues 170–206 (NKKKLDKEKKKNVIELKEYLEDLKKRMFDMQKRLNDI) are a coiled coil. Disordered regions lie at residues 606 to 627 (NNNTNNTNNNSNNNNNNNIFNN) and 782 to 905 (ASVQ…EHDE). Basic and acidic residues predominate over residues 788–891 (DKGEDNNDND…EKDKSRDDNK (104 aa)). Residues 890-920 (NKAQNNNSTDNEEHDEITEQIGFLKNHNQKY) adopt a coiled-coil conformation.

This is an uncharacterized protein from Plasmodium falciparum (isolate 3D7).